The following is a 426-amino-acid chain: Glutamate-1-semialdehyde 2,1-aminomutase (426 aa).

Position 267 is an N6-(pyridoxal phosphate)lysine (lysine 267).

Belongs to the class-III pyridoxal-phosphate-dependent aminotransferase family. HemL subfamily. Homodimer. Pyridoxal 5'-phosphate is required as a cofactor.

The protein resides in the cytoplasm. The catalysed reaction is (S)-4-amino-5-oxopentanoate = 5-aminolevulinate. It participates in porphyrin-containing compound metabolism; protoporphyrin-IX biosynthesis; 5-aminolevulinate from L-glutamyl-tRNA(Glu): step 2/2. This is Glutamate-1-semialdehyde 2,1-aminomutase from Bdellovibrio bacteriovorus (strain ATCC 15356 / DSM 50701 / NCIMB 9529 / HD100).